We begin with the raw amino-acid sequence, 240 residues long: 1-(5-phosphoribosyl)-5-[(5-phosphoribosylamino)methylideneamino] imidazole-4-carboxamide isomerase (240 aa).

Residue D8 is the Proton acceptor of the active site. The active-site Proton donor is D129.

The protein belongs to the HisA/HisF family.

Its subcellular location is the cytoplasm. It carries out the reaction 1-(5-phospho-beta-D-ribosyl)-5-[(5-phospho-beta-D-ribosylamino)methylideneamino]imidazole-4-carboxamide = 5-[(5-phospho-1-deoxy-D-ribulos-1-ylimino)methylamino]-1-(5-phospho-beta-D-ribosyl)imidazole-4-carboxamide. It functions in the pathway amino-acid biosynthesis; L-histidine biosynthesis; L-histidine from 5-phospho-alpha-D-ribose 1-diphosphate: step 4/9. This Listeria monocytogenes serotype 4b (strain CLIP80459) protein is 1-(5-phosphoribosyl)-5-[(5-phosphoribosylamino)methylideneamino] imidazole-4-carboxamide isomerase.